The chain runs to 285 residues: Phosphate import ATP-binding protein PstB (285 aa).

The ABC transporter domain occupies 39–280 (LEVSDLQLWY…PAKKQTEDYI (242 aa)). 71-78 (GPSGCGKS) is an ATP binding site.

Belongs to the ABC transporter superfamily. Phosphate importer (TC 3.A.1.7) family. As to quaternary structure, the complex is composed of two ATP-binding proteins (PstB), two transmembrane proteins (PstC and PstA) and a solute-binding protein (PstS).

Its subcellular location is the cell inner membrane. It carries out the reaction phosphate(out) + ATP + H2O = ADP + 2 phosphate(in) + H(+). In terms of biological role, part of the ABC transporter complex PstSACB involved in phosphate import. Responsible for energy coupling to the transport system. This chain is Phosphate import ATP-binding protein PstB, found in Alkalilimnicola ehrlichii (strain ATCC BAA-1101 / DSM 17681 / MLHE-1).